A 296-amino-acid polypeptide reads, in one-letter code: Formamidopyrimidine-DNA glycosylase (296 aa).

P2 serves as the catalytic Schiff-base intermediate with DNA. The active-site Proton donor is the E3. Residue K61 is the Proton donor; for beta-elimination activity of the active site. H104, R123, and K169 together coordinate DNA. An FPG-type zinc finger spans residues 255-289; that stretch reads DAYGREGEPCRRCGAIMRRDKFMNRSSFYCPRCQP. R279 (proton donor; for delta-elimination activity) is an active-site residue.

The protein belongs to the FPG family. As to quaternary structure, monomer. Zn(2+) is required as a cofactor.

The enzyme catalyses Hydrolysis of DNA containing ring-opened 7-methylguanine residues, releasing 2,6-diamino-4-hydroxy-5-(N-methyl)formamidopyrimidine.. It carries out the reaction 2'-deoxyribonucleotide-(2'-deoxyribose 5'-phosphate)-2'-deoxyribonucleotide-DNA = a 3'-end 2'-deoxyribonucleotide-(2,3-dehydro-2,3-deoxyribose 5'-phosphate)-DNA + a 5'-end 5'-phospho-2'-deoxyribonucleoside-DNA + H(+). In terms of biological role, involved in base excision repair of DNA damaged by oxidation or by mutagenic agents. Acts as a DNA glycosylase that recognizes and removes damaged bases. Has a preference for oxidized purines, such as 7,8-dihydro-8-oxoguanine (8-oxoG). Has AP (apurinic/apyrimidinic) lyase activity and introduces nicks in the DNA strand. Cleaves the DNA backbone by beta-delta elimination to generate a single-strand break at the site of the removed base with both 3'- and 5'-phosphates. This Mycobacterium sp. (strain KMS) protein is Formamidopyrimidine-DNA glycosylase.